We begin with the raw amino-acid sequence, 305 residues long: Aurasperone B biosynthesis cluster protein A (305 aa).

The N-terminal stretch at 1–26 (MSIFFSIRFWPAAISAAILWLPQVLG) is a signal peptide. Residues Asn-29, Asn-34, Asn-64, Asn-83, Asn-132, Asn-183, Asn-218, and Asn-288 are each glycosylated (N-linked (GlcNAc...) asparagine).

This sequence belongs to the bfoA family.

Part of the gene cluster that mediates the biosynthesis of aurasperone B, a dimeric gamma-naphthopyrone. The first step in the biosynthesis of aurasperone B is the production of gamma-naphthopyrone precursor YWA1 by the non-reducing polyketide synthase albA, via condensation of one acetyl-CoA starter unit with 6 malonyl-CoA units. YWA1 is then methylated by aunE at position C-6 to yield foncesin which is further methylated at position C-8 by aunD to produce fonsecin B. A key enzyme in the biosynthetic pathway is the cytochrome P450 monooxygenase aunB which catalyzes the oxidative dimerization of fonsecin B to aurasperone B. AunB also catalyzes the oxidative dimerization of rubrofusarin B into aurasperone A. This is Aurasperone B biosynthesis cluster protein A from Aspergillus niger (strain ATCC 1015 / CBS 113.46 / FGSC A1144 / LSHB Ac4 / NCTC 3858a / NRRL 328 / USDA 3528.7).